The chain runs to 205 residues: Nascent polypeptide-associated complex subunit alpha-like protein (205 aa).

Disordered regions lie at residues 1-73 (MPSV…RKAM) and 137-166 (KAPN…DTGV). Residues 20-29 (EQQELEHSDE) are compositionally biased toward basic and acidic residues. Over residues 30–51 (PILEDDEDDDDEEDDNDEDDAQ) the composition is skewed to acidic residues. Basic and acidic residues predominate over residues 56–66 (GEGKSKQSRSE). Positions 63-128 (SRSEKKCRKA…AKIEDLSSQL (66 aa)) constitute an NAC-A/B domain. A compositionally biased stretch (acidic residues) spans 155-165 (QEDEDEVDDTG). In terms of domain architecture, UBA spans 166 to 203 (VEPKDIELVMTQAGVSRTKAVKALKAADGDIVSAIMDL).

This sequence belongs to the NAC-alpha family.

Its function is as follows. May promote appropriate targeting of ribosome-nascent polypeptide complexes. The chain is Nascent polypeptide-associated complex subunit alpha-like protein from Pinus taeda (Loblolly pine).